We begin with the raw amino-acid sequence, 98 residues long: MMCGAPSAVQPATAETQDIADQVRSQLEEKENKKFPVFKAVSFKSQVVAGTNYFIKVHVGDEDFVHLRVFKSLPHENKPLTLSDYQTNKAKHDELSYF.

M1 carries the post-translational modification N-acetylmethionine. Positions 46-50 (QVVAG) match the Secondary area of contact motif.

Belongs to the cystatin family. In terms of assembly, able to form dimers stabilized by noncovalent forces.

It localises to the cytoplasm. The protein resides in the nucleus. Functionally, this is an intracellular thiol proteinase inhibitor. Tightly binding reversible inhibitor of cathepsins L, H and B. In Macaca fuscata fuscata (Japanese macaque), this protein is Cystatin-B (CSTB).